We begin with the raw amino-acid sequence, 409 residues long: NADH-quinone oxidoreductase subunit D (409 aa).

The protein belongs to the complex I 49 kDa subunit family. In terms of assembly, NDH-1 is composed of 14 different subunits. Subunits NuoB, C, D, E, F, and G constitute the peripheral sector of the complex.

The protein localises to the cell inner membrane. The enzyme catalyses a quinone + NADH + 5 H(+)(in) = a quinol + NAD(+) + 4 H(+)(out). In terms of biological role, NDH-1 shuttles electrons from NADH, via FMN and iron-sulfur (Fe-S) centers, to quinones in the respiratory chain. The immediate electron acceptor for the enzyme in this species is believed to be ubiquinone. Couples the redox reaction to proton translocation (for every two electrons transferred, four hydrogen ions are translocated across the cytoplasmic membrane), and thus conserves the redox energy in a proton gradient. In Campylobacter concisus (strain 13826), this protein is NADH-quinone oxidoreductase subunit D.